A 471-amino-acid chain; its full sequence is 5-hydroxytryptamine receptor 2A (471 aa).

The Extracellular portion of the chain corresponds to 1–80 (MEILCEDNIS…LQEKNWSALL (80 aa)). N-linked (GlcNAc...) asparagine glycans are attached at residues asparagine 8, asparagine 38, asparagine 44, asparagine 51, and asparagine 54. The chain crosses the membrane as a helical span at residues 81–97 (TTVVIILTIAGNILVIM). Topologically, residues 98–111 (AVSLEKKLQNATNY) are cytoplasmic. Residues 112–137 (FLMSLAIADMLLGFLVMPVSMLTILY) traverse the membrane as a helical segment. Topologically, residues 138–146 (GYRWPLPSK) are extracellular. Residues 147–171 (LCAVWIYLDVLFSTASIMHLCAISL) form a helical membrane-spanning segment. Cysteine 148 and cysteine 227 form a disulfide bridge. Aspartate 155 contacts serotonin. A DRY motif; important for ligand-induced conformation changes motif is present at residues 172–174 (DRY). Topologically, residues 172–191 (DRYVAIQNPIHHSRFNSRTK) are cytoplasmic. The chain crosses the membrane as a helical span at residues 192–215 (AFLKIIAVWTISVGISMPIPVFGL). The Extracellular portion of the chain corresponds to 216–232 (QDDSKVFKEGSCLLADD). Residues 233–258 (NFVLIGSFVAFFIPLTIMVITYFLTI) traverse the membrane as a helical segment. Residues 259-322 (KSLQKEATLC…QSISNEQKAC (64 aa)) lie on the Cytoplasmic side of the membrane. Position 280 is a phosphoserine (serine 280). A helical transmembrane segment spans residues 323 to 348 (KVLGIVFFLFVVMWCPFFITNIMAVI). Asparagine 343 provides a ligand contact to serotonin. The cysteines at positions 349 and 353 are disulfide-linked. Residues 349-356 (CKESCNEN) lie on the Extracellular side of the membrane. Residues 357–382 (VIGALLNVFVWIGYLSSAVNPLVYTL) traverse the membrane as a helical segment. The short motif at 376–380 (NPLVY) is the NPxxY motif; important for ligand-induced conformation changes and signaling element. Residues 383–471 (FNKTYRSAFS…ETVNEKVSCV (89 aa)) are Cytoplasmic-facing. The PDZ-binding signature appears at 469–471 (SCV).

It belongs to the G-protein coupled receptor 1 family. In terms of assembly, interacts (via C-terminus) with MPDZ and PATJ. May interact (via C-terminus) with MPP3, PRDX6, DLG4, DLG1, CASK, APBA1 and MAGI2. Interacts with GRM2 and DRD2; this may affect signaling. Detected in neurons in brain cortex. Detected in adult intestine, especially in mucosal epithelium, longitudinal and circular layers of muscularis externa and myenteric plexuses. Highly expressed in Paneth cells, and detected at lower levels in enterocytes (at protein level). Detected in neurons in the brain cortex.

Its subcellular location is the cell membrane. The protein resides in the cell projection. It is found in the dendrite. The protein localises to the axon. It localises to the cytoplasmic vesicle. Its subcellular location is the membrane. The protein resides in the caveola. It is found in the presynapse. With respect to regulation, G-protein coupled receptor activity is regulated by lipids: oleamide increases HTR2A-mediated activity. Its function is as follows. G-protein coupled receptor for 5-hydroxytryptamine (serotonin). Also functions as a receptor for various drugs and psychoactive substances, including mescaline, psilocybin, 1-(2,5-dimethoxy-4-iodophenyl)-2-aminopropane (DOI) and lysergic acid diethylamide (LSD). Ligand binding causes a conformation change that triggers signaling via guanine nucleotide-binding proteins (G proteins) and modulates the activity of downstream effectors. HTR2A is coupled to G(q)/G(11) G alpha proteins and activates phospholipase C-beta, releasing diacylglycerol (DAG) and inositol 1,4,5-trisphosphate (IP3) second messengers that modulate the activity of phosphatidylinositol 3-kinase and promote the release of Ca(2+) ions from intracellular stores, respectively. Beta-arrestin family members inhibit signaling via G proteins and mediate activation of alternative signaling pathways. Affects neural activity, perception, cognition and mood. Plays a role in the regulation of behavior, including responses to anxiogenic situations and psychoactive substances. Plays a role in intestinal smooth muscle contraction, and may play a role in arterial vasoconstriction. This Mus musculus (Mouse) protein is 5-hydroxytryptamine receptor 2A (Htr2a).